Here is a 460-residue protein sequence, read N- to C-terminus: MTRQHFGTDGIRGTVGQPPITPDFVLRLAHAVGRVLRQTQERPVVLIGKDTRISGYMLESALESGFNSAGVDVVLLGPLPTPGVAYLTCAQRASLGVVISASHNPYPDNGIKFFSAQGSKLSDAWEQAVETALGEPPAWTNSANLGKARRLNDAAERYIEFCKNTFAQDLSLKGLKIVLDAAHGAAYQVGPKVLRELEAEVIAIGCSPDGLNINHEVGATHPDTLVRAVHAHHADYGIALDGDADRVLIVDATGRLYNGDELLYLMVADRMGRDEHVPGVVGTLMTNRAVELALQARGVEFVRAKVGDRYILEELTRRDWALGGEGSGHLLALDRHTTGDGIGSALQVLQACVRSRSTLAQLLAAVTLYPQVLLNVRLPPDQDWTTNRLLADAIQAVEQQLGASGRVLIRASGTEPLLRVMVEARDAQLADSCAQRLANAARAGWQGHTSLKNAPPMGAN.

Serine 102 functions as the Phosphoserine intermediate in the catalytic mechanism. Mg(2+)-binding residues include serine 102, aspartate 241, aspartate 243, and aspartate 245. Serine 102 carries the post-translational modification Phosphoserine.

This sequence belongs to the phosphohexose mutase family. The cofactor is Mg(2+). Activated by phosphorylation.

The catalysed reaction is alpha-D-glucosamine 1-phosphate = D-glucosamine 6-phosphate. Functionally, catalyzes the conversion of glucosamine-6-phosphate to glucosamine-1-phosphate. This is Phosphoglucosamine mutase from Verminephrobacter eiseniae (strain EF01-2).